The following is a 253-amino-acid chain: Hydroxyacylglutathione hydrolase (253 aa).

Residues H54, H56, D58, H59, H112, D131, and H169 each coordinate Zn(2+).

This sequence belongs to the metallo-beta-lactamase superfamily. Glyoxalase II family. Monomer. Requires Zn(2+) as cofactor.

It catalyses the reaction an S-(2-hydroxyacyl)glutathione + H2O = a 2-hydroxy carboxylate + glutathione + H(+). Its pathway is secondary metabolite metabolism; methylglyoxal degradation; (R)-lactate from methylglyoxal: step 2/2. Thiolesterase that catalyzes the hydrolysis of S-D-lactoyl-glutathione to form glutathione and D-lactic acid. In Bartonella tribocorum (strain CIP 105476 / IBS 506), this protein is Hydroxyacylglutathione hydrolase.